A 393-amino-acid chain; its full sequence is NAD(P)H-quinone oxidoreductase subunit H, chloroplastic (393 aa).

Belongs to the complex I 49 kDa subunit family. NDH is composed of at least 16 different subunits, 5 of which are encoded in the nucleus.

The protein resides in the plastid. It is found in the chloroplast thylakoid membrane. The enzyme catalyses a plastoquinone + NADH + (n+1) H(+)(in) = a plastoquinol + NAD(+) + n H(+)(out). It catalyses the reaction a plastoquinone + NADPH + (n+1) H(+)(in) = a plastoquinol + NADP(+) + n H(+)(out). Its function is as follows. NDH shuttles electrons from NAD(P)H:plastoquinone, via FMN and iron-sulfur (Fe-S) centers, to quinones in the photosynthetic chain and possibly in a chloroplast respiratory chain. The immediate electron acceptor for the enzyme in this species is believed to be plastoquinone. Couples the redox reaction to proton translocation, and thus conserves the redox energy in a proton gradient. The polypeptide is NAD(P)H-quinone oxidoreductase subunit H, chloroplastic (Saccharum hybrid (Sugarcane)).